A 131-amino-acid polypeptide reads, in one-letter code: Profilin-2 (131 aa).

Belongs to the profilin family. Occurs in many kinds of cells as a complex with monomeric actin in a 1:1 ratio.

It localises to the cytoplasm. The protein resides in the cytoskeleton. Its function is as follows. Binds to actin and affects the structure of the cytoskeleton. At high concentrations, profilin prevents the polymerization of actin, whereas it enhances it at low concentrations. By binding to PIP2, it inhibits the formation of IP3 and DG. This Solanum lycopersicum (Tomato) protein is Profilin-2.